Reading from the N-terminus, the 111-residue chain is Probable U2 small nuclear ribonucleoprotein B'' (111 aa).

The RRM domain maps to 4–83; sequence NTLYVNNLND…KEMKIQYAHS (80 aa).

In terms of assembly, belongs to the 40S cdc5-associated complex (or cwf complex), a spliceosome sub-complex reminiscent of a late-stage spliceosome composed of the U2, U5 and U6 snRNAs and at least brr2, cdc5, cwf2/prp3, cwf3/syf1, cwf4/syf3, cwf5/ecm2, spp42/cwf6, cwf7/spf27, cwf8, cwf9, cwf10, cwf11, cwf12, prp45/cwf13, cwf14, cwf15, cwf16, cwf17, cwf18, cwf19, cwf20, cwf21, cwf22, cwf23, cwf24, cwf25, cwf26, cyp7/cwf27, cwf28, cwf29/ist3, lea1, msl1, prp5/cwf1, prp10, prp12/sap130, prp17, prp22, sap61, sap62, sap114, sap145, slu7, smb1, smd1, smd3, smf1, smg1 and syf2.

Its subcellular location is the nucleus. Functionally, involved in pre-mRNA splicing. This protein is associated with snRNP U2. It binds stem loop IV of U2 snRNA. This is Probable U2 small nuclear ribonucleoprotein B'' (msl1) from Schizosaccharomyces pombe (strain 972 / ATCC 24843) (Fission yeast).